Here is a 138-residue protein sequence, read N- to C-terminus: Small ribosomal subunit protein uS12 (138 aa).

A disordered region spans residues 33-55; it reads KEHTNVSSPQKRGVCTRVGTMTP.

It belongs to the universal ribosomal protein uS12 family. As to quaternary structure, part of the 30S ribosomal subunit. Contacts proteins S8 and S17. May interact with IF1 in the 30S initiation complex. Interacts with BrxC.

Its function is as follows. With S4 and S5 plays an important role in translational accuracy. Functionally, interacts with and stabilizes bases of the 16S rRNA that are involved in tRNA selection in the A site and with the mRNA backbone. Located at the interface of the 30S and 50S subunits, it traverses the body of the 30S subunit contacting proteins on the other side and probably holding the rRNA structure together. The combined cluster of proteins S8, S12 and S17 appears to hold together the shoulder and platform of the 30S subunit. This chain is Small ribosomal subunit protein uS12 (rpsL), found in Bacillus subtilis (strain 168).